The chain runs to 257 residues: 3-deoxy-manno-octulosonate cytidylyltransferase (257 aa).

Belongs to the KdsB family.

It is found in the cytoplasm. The catalysed reaction is 3-deoxy-alpha-D-manno-oct-2-ulosonate + CTP = CMP-3-deoxy-beta-D-manno-octulosonate + diphosphate. It participates in nucleotide-sugar biosynthesis; CMP-3-deoxy-D-manno-octulosonate biosynthesis; CMP-3-deoxy-D-manno-octulosonate from 3-deoxy-D-manno-octulosonate and CTP: step 1/1. It functions in the pathway bacterial outer membrane biogenesis; lipopolysaccharide biosynthesis. Functionally, activates KDO (a required 8-carbon sugar) for incorporation into bacterial lipopolysaccharide in Gram-negative bacteria. The sequence is that of 3-deoxy-manno-octulosonate cytidylyltransferase from Xylella fastidiosa (strain M12).